The primary structure comprises 208 residues: ATP phosphoribosyltransferase (208 aa).

This sequence belongs to the ATP phosphoribosyltransferase family. Short subfamily. Heteromultimer composed of HisG and HisZ subunits.

Its subcellular location is the cytoplasm. The catalysed reaction is 1-(5-phospho-beta-D-ribosyl)-ATP + diphosphate = 5-phospho-alpha-D-ribose 1-diphosphate + ATP. It participates in amino-acid biosynthesis; L-histidine biosynthesis; L-histidine from 5-phospho-alpha-D-ribose 1-diphosphate: step 1/9. In terms of biological role, catalyzes the condensation of ATP and 5-phosphoribose 1-diphosphate to form N'-(5'-phosphoribosyl)-ATP (PR-ATP). Has a crucial role in the pathway because the rate of histidine biosynthesis seems to be controlled primarily by regulation of HisG enzymatic activity. This Hydrogenovibrio crunogenus (strain DSM 25203 / XCL-2) (Thiomicrospira crunogena) protein is ATP phosphoribosyltransferase.